We begin with the raw amino-acid sequence, 110 residues long: Large ribosomal subunit protein uL22 (110 aa).

It belongs to the universal ribosomal protein uL22 family. As to quaternary structure, part of the 50S ribosomal subunit.

This protein binds specifically to 23S rRNA; its binding is stimulated by other ribosomal proteins, e.g. L4, L17, and L20. It is important during the early stages of 50S assembly. It makes multiple contacts with different domains of the 23S rRNA in the assembled 50S subunit and ribosome. Functionally, the globular domain of the protein is located near the polypeptide exit tunnel on the outside of the subunit, while an extended beta-hairpin is found that lines the wall of the exit tunnel in the center of the 70S ribosome. The polypeptide is Large ribosomal subunit protein uL22 (Shewanella loihica (strain ATCC BAA-1088 / PV-4)).